The chain runs to 220 residues: Probable septum site-determining protein MinC (220 aa).

It belongs to the MinC family. In terms of assembly, interacts with MinD and FtsZ.

Its function is as follows. Cell division inhibitor that blocks the formation of polar Z ring septums. Rapidly oscillates between the poles of the cell to destabilize FtsZ filaments that have formed before they mature into polar Z rings. Prevents FtsZ polymerization. The chain is Probable septum site-determining protein MinC from Prochlorococcus marinus subsp. pastoris (strain CCMP1986 / NIES-2087 / MED4).